We begin with the raw amino-acid sequence, 150 residues long: UPF0201 protein APE_1751 (150 aa).

This sequence belongs to the UPF0201 family.

The protein is UPF0201 protein APE_1751 of Aeropyrum pernix (strain ATCC 700893 / DSM 11879 / JCM 9820 / NBRC 100138 / K1).